The primary structure comprises 428 residues: MTTRAASANLANARMMHNMEEAGHMANLKGRPHTSHASQRNTLGDIGNQVSAITISDVPRKDPIIKKEIVHLSSHQHKILTKSKATTSLKSLAEESHIPKKQEAFTFLEPVAAMPKPTTVPTATVLPQPTVPVPMDISENVPESFSRVLLNVQNIDANDKENPQLVSEYVNDIYDYMRDLEGKYPIRHNYLENQEITGKMRAILIDWLCQVHHRFHLLQETLYLTVAIIDRLLQESPVPRNKLQLVGVTSMLIASKYEEMYAPEVADFVYITDNAYTKKEILEMEQHILKKLNFSFGRPLCLHFLRRDSKAGQVDANKHTLAKYLMELTITEYDMVQYLPSKIAAAALCLSMKLLDSTHWTETLTHYSSYCEKDLVSTMQKLASLVIKAENSKLTAVHTKYSSSKFMKISKLAALKSPLVKELAAASV.

This sequence belongs to the cyclin family. Cyclin AB subfamily. Interacts with the CDC2 protein kinase to form a serine/threonine kinase holoenzyme complex also known as maturation promoting factor (MPF). The cyclin subunit imparts substrate specificity to the complex.

In terms of biological role, essential for the control of the cell cycle at the G2/M (mitosis) transition. This Spisula solidissima (Atlantic surf-clam) protein is G2/mitotic-specific cyclin-B.